The primary structure comprises 352 residues: UDP-N-acetylglucosamine--N-acetylmuramyl-(pentapeptide) pyrophosphoryl-undecaprenol N-acetylglucosamine transferase (352 aa).

Residues 11–13, Asn120, Arg161, Ser188, and Gln286 each bind UDP-N-acetyl-alpha-D-glucosamine; that span reads TGG.

Belongs to the glycosyltransferase 28 family. MurG subfamily.

Its subcellular location is the cell inner membrane. It carries out the reaction di-trans,octa-cis-undecaprenyl diphospho-N-acetyl-alpha-D-muramoyl-L-alanyl-D-glutamyl-meso-2,6-diaminopimeloyl-D-alanyl-D-alanine + UDP-N-acetyl-alpha-D-glucosamine = di-trans,octa-cis-undecaprenyl diphospho-[N-acetyl-alpha-D-glucosaminyl-(1-&gt;4)]-N-acetyl-alpha-D-muramoyl-L-alanyl-D-glutamyl-meso-2,6-diaminopimeloyl-D-alanyl-D-alanine + UDP + H(+). Its pathway is cell wall biogenesis; peptidoglycan biosynthesis. Functionally, cell wall formation. Catalyzes the transfer of a GlcNAc subunit on undecaprenyl-pyrophosphoryl-MurNAc-pentapeptide (lipid intermediate I) to form undecaprenyl-pyrophosphoryl-MurNAc-(pentapeptide)GlcNAc (lipid intermediate II). This chain is UDP-N-acetylglucosamine--N-acetylmuramyl-(pentapeptide) pyrophosphoryl-undecaprenol N-acetylglucosamine transferase, found in Prochlorococcus marinus (strain NATL2A).